The sequence spans 359 residues: Large ribosomal subunit protein uL3 (359 aa).

The disordered stretch occupies residues 336–359 (VRPPAKRPPAEAPQITYISRESKQ).

The protein belongs to the universal ribosomal protein uL3 family. As to quaternary structure, part of the 50S ribosomal subunit. Forms a cluster with proteins L14 and L24e.

One of the primary rRNA binding proteins, it binds directly near the 3'-end of the 23S rRNA, where it nucleates assembly of the 50S subunit. The protein is Large ribosomal subunit protein uL3 of Thermococcus sibiricus (strain DSM 12597 / MM 739).